The chain runs to 528 residues: Cytochrome P450 1A5 (528 aa).

Cys-467 contacts heme.

It belongs to the cytochrome P450 family. The cofactor is heme.

Its subcellular location is the endoplasmic reticulum membrane. The protein resides in the microsome membrane. The catalysed reaction is an organic molecule + reduced [NADPH--hemoprotein reductase] + O2 = an alcohol + oxidized [NADPH--hemoprotein reductase] + H2O + H(+). Functionally, cytochromes P450 are a group of heme-thiolate monooxygenases. In liver microsomes, this enzyme is involved in an NADPH-dependent electron transport pathway. It oxidizes a variety of structurally unrelated compounds, including steroids, fatty acids, and xenobiotics. The polypeptide is Cytochrome P450 1A5 (CYP1A5) (Gallus gallus (Chicken)).